Here is a 240-residue protein sequence, read N- to C-terminus: Ribosomal RNA small subunit methyltransferase G (240 aa).

S-adenosyl-L-methionine contacts are provided by residues Gly-79, Phe-84, 130 to 131 (AE), and Arg-149.

Belongs to the methyltransferase superfamily. RNA methyltransferase RsmG family.

Its subcellular location is the cytoplasm. Functionally, specifically methylates the N7 position of a guanine in 16S rRNA. This chain is Ribosomal RNA small subunit methyltransferase G, found in Lactobacillus acidophilus (strain ATCC 700396 / NCK56 / N2 / NCFM).